Reading from the N-terminus, the 163-residue chain is Nucleotide-binding protein LA_3406 (163 aa).

This sequence belongs to the YajQ family.

In terms of biological role, nucleotide-binding protein. The sequence is that of Nucleotide-binding protein LA_3406 from Leptospira interrogans serogroup Icterohaemorrhagiae serovar Lai (strain 56601).